The sequence spans 173 residues: MTGVKIVQVSEKDLPEFIAISRETFADTFGKDNSPEDMAKFLEKTINEDKLGGEIATPGSFFYFLKVDGEVAGYLKLDVDDAQNEEVDPNGLEIERIYLRKSFQHRGLGKQLFEFAEEKGREWSKSVLWLGVWEHNENAKNFYASRGLTRFSEHVFVLGDDRQTDFLLKKALV.

The N-acetyltransferase domain occupies 4–173; the sequence is VKIVQVSEKD…TDFLLKKALV (170 aa). Acetyl-CoA-binding positions include 97–99, 106–110, and 136–138; these read IYL, RGLGK, and NEN.

This is an uncharacterized protein from Lactobacillus delbrueckii subsp. lactis.